A 427-amino-acid polypeptide reads, in one-letter code: Dihydroorotase (427 aa).

Zn(2+) is bound by residues H60 and H62. Substrate is bound by residues 62 to 64 and N94; that span reads HLR. 3 residues coordinate Zn(2+): D152, H179, and H232. N278 provides a ligand contact to substrate. Position 305 (D305) interacts with Zn(2+). D305 is a catalytic residue. Residues H309 and 323-324 contribute to the substrate site; that span reads FG.

This sequence belongs to the metallo-dependent hydrolases superfamily. DHOase family. Class I DHOase subfamily. Zn(2+) serves as cofactor.

The catalysed reaction is (S)-dihydroorotate + H2O = N-carbamoyl-L-aspartate + H(+). Its pathway is pyrimidine metabolism; UMP biosynthesis via de novo pathway; (S)-dihydroorotate from bicarbonate: step 3/3. Functionally, catalyzes the reversible cyclization of carbamoyl aspartate to dihydroorotate. In Geobacillus sp. (strain WCH70), this protein is Dihydroorotase.